The chain runs to 430 residues: Enolase (430 aa).

Gln163 lines the (2R)-2-phosphoglycerate pocket. Glu205 serves as the catalytic Proton donor. Positions 242, 288, and 315 each coordinate Mg(2+). Positions 340, 369, 370, and 391 each coordinate (2R)-2-phosphoglycerate. Residue Lys340 is the Proton acceptor of the active site.

The protein belongs to the enolase family. Mg(2+) serves as cofactor.

The protein resides in the cytoplasm. Its subcellular location is the secreted. It is found in the cell surface. The enzyme catalyses (2R)-2-phosphoglycerate = phosphoenolpyruvate + H2O. It functions in the pathway carbohydrate degradation; glycolysis; pyruvate from D-glyceraldehyde 3-phosphate: step 4/5. Catalyzes the reversible conversion of 2-phosphoglycerate (2-PG) into phosphoenolpyruvate (PEP). It is essential for the degradation of carbohydrates via glycolysis. The protein is Enolase of Aster yellows witches'-broom phytoplasma (strain AYWB).